A 294-amino-acid polypeptide reads, in one-letter code: MRATIPFPDMSPEIFSISVFGFDLALRWYALAYIVGIVLGWRLVLRAVKRPDLWRDDQPVMTAAQIEDLLTWVIVGVILGGRLGYVFFYQPGYYLQNPSEILAVWQGGMAFHGGLLGVIAAGFIYTWRHRIARLSAADIMALGVPPGLLLGRIANFINAELWGRATDMPWGVAFPGAAAQDCAGVEGICARHPSQLYEAGLEGLILGALLIWLVWKKAALKTPGYVAGVFFAGYGVSRFFVEFFRQPDAQFITDGNPLGLAWHINGWGLTMGQCLSLPMILLGIWLIARARHAA.

A run of 7 helical transmembrane segments spans residues 19–39 (VFGF…GIVL), 69–89 (LLTW…VFFY), 101–121 (ILAV…VIAA), 139–159 (IMAL…FINA), 195–215 (QLYE…WLVW), 224–244 (GYVA…VEFF), and 267–287 (WGLT…IWLI). R152 provides a ligand contact to a 1,2-diacyl-sn-glycero-3-phospho-(1'-sn-glycerol).

It belongs to the Lgt family.

It localises to the cell inner membrane. It catalyses the reaction L-cysteinyl-[prolipoprotein] + a 1,2-diacyl-sn-glycero-3-phospho-(1'-sn-glycerol) = an S-1,2-diacyl-sn-glyceryl-L-cysteinyl-[prolipoprotein] + sn-glycerol 1-phosphate + H(+). The protein operates within protein modification; lipoprotein biosynthesis (diacylglyceryl transfer). In terms of biological role, catalyzes the transfer of the diacylglyceryl group from phosphatidylglycerol to the sulfhydryl group of the N-terminal cysteine of a prolipoprotein, the first step in the formation of mature lipoproteins. This Roseobacter denitrificans (strain ATCC 33942 / OCh 114) (Erythrobacter sp. (strain OCh 114)) protein is Phosphatidylglycerol--prolipoprotein diacylglyceryl transferase.